The chain runs to 168 residues: Photosystem I assembly protein Ycf3 (168 aa).

3 TPR repeats span residues 35–68 (AFTY…EIDP), 72–105 (SYIL…NPFL), and 120–153 (GEQA…TPGN).

The protein belongs to the Ycf3 family.

It localises to the plastid. The protein localises to the chloroplast thylakoid membrane. Essential for the assembly of the photosystem I (PSI) complex. May act as a chaperone-like factor to guide the assembly of the PSI subunits. This is Photosystem I assembly protein Ycf3 from Atropa belladonna (Belladonna).